We begin with the raw amino-acid sequence, 346 residues long: 4-hydroxy-3-methylbut-2-enyl diphosphate reductase (346 aa).

A [4Fe-4S] cluster-binding site is contributed by cysteine 19. Residues histidine 48 and histidine 84 each coordinate (2E)-4-hydroxy-3-methylbut-2-enyl diphosphate. Dimethylallyl diphosphate-binding residues include histidine 48 and histidine 84. Residues histidine 48 and histidine 84 each coordinate isopentenyl diphosphate. Cysteine 106 contributes to the [4Fe-4S] cluster binding site. Histidine 134 contacts (2E)-4-hydroxy-3-methylbut-2-enyl diphosphate. Histidine 134 contacts dimethylallyl diphosphate. Position 134 (histidine 134) interacts with isopentenyl diphosphate. The Proton donor role is filled by glutamate 136. Threonine 175 lines the (2E)-4-hydroxy-3-methylbut-2-enyl diphosphate pocket. Position 205 (cysteine 205) interacts with [4Fe-4S] cluster. Positions 233, 234, 235, and 278 each coordinate (2E)-4-hydroxy-3-methylbut-2-enyl diphosphate. Residues serine 233, serine 234, asparagine 235, and serine 278 each contribute to the dimethylallyl diphosphate site. Isopentenyl diphosphate is bound by residues serine 233, serine 234, asparagine 235, and serine 278.

It belongs to the IspH family. The cofactor is [4Fe-4S] cluster.

It catalyses the reaction isopentenyl diphosphate + 2 oxidized [2Fe-2S]-[ferredoxin] + H2O = (2E)-4-hydroxy-3-methylbut-2-enyl diphosphate + 2 reduced [2Fe-2S]-[ferredoxin] + 2 H(+). It carries out the reaction dimethylallyl diphosphate + 2 oxidized [2Fe-2S]-[ferredoxin] + H2O = (2E)-4-hydroxy-3-methylbut-2-enyl diphosphate + 2 reduced [2Fe-2S]-[ferredoxin] + 2 H(+). Its pathway is isoprenoid biosynthesis; dimethylallyl diphosphate biosynthesis; dimethylallyl diphosphate from (2E)-4-hydroxy-3-methylbutenyl diphosphate: step 1/1. It functions in the pathway isoprenoid biosynthesis; isopentenyl diphosphate biosynthesis via DXP pathway; isopentenyl diphosphate from 1-deoxy-D-xylulose 5-phosphate: step 6/6. Functionally, catalyzes the conversion of 1-hydroxy-2-methyl-2-(E)-butenyl 4-diphosphate (HMBPP) into a mixture of isopentenyl diphosphate (IPP) and dimethylallyl diphosphate (DMAPP). Acts in the terminal step of the DOXP/MEP pathway for isoprenoid precursor biosynthesis. The sequence is that of 4-hydroxy-3-methylbut-2-enyl diphosphate reductase from Brucella suis biovar 1 (strain 1330).